The chain runs to 1382 residues: ATP-dependent RNA helicase TDRD9 (1382 aa).

The disordered stretch occupies residues 36–62 (AAREEVQRQDVAPGAGPAAQAPALAQA). A compositionally biased stretch (low complexity) spans 47-62 (APGAGPAAQAPALAQA). The Helicase ATP-binding domain maps to 142-308 (VSLIESNSVV…FAVPVQNKMN (167 aa)). An ATP-binding site is contributed by 155-162 (GATGSGKS). The DEAH box signature appears at 254–257 (DEVH). Positions 377-544 (SGAQFVLERS…ILKVKLLDMG (168 aa)) constitute a Helicase C-terminal domain. Residues 944-1004 (HPHPDLVCLA…MEIPCQFLEL (61 aa)) form the Tudor domain.

This sequence belongs to the DEAD box helicase family. DEAH subfamily. In terms of assembly, interacts with piRNA-associated proteins PIWIL1 and PIWIL4.

The protein resides in the cytoplasm. It is found in the nucleus. It carries out the reaction ATP + H2O = ADP + phosphate + H(+). Functionally, ATP-binding RNA helicase required during spermatogenesis. Required to repress transposable elements and prevent their mobilization, which is essential for the germline integrity. Acts via the piRNA metabolic process, which mediates the repression of transposable elements during meiosis by forming complexes composed of piRNAs and Piwi proteins and governs the methylation and subsequent repression of transposons. Acts downstream of piRNA biogenesis: exclusively required for transposon silencing in the nucleus, suggesting that it acts as a nuclear effector in the nucleus together with PIWIL4. The polypeptide is ATP-dependent RNA helicase TDRD9 (Homo sapiens (Human)).